A 258-amino-acid polypeptide reads, in one-letter code: Cyclohexa-1,5-dienecarbonyl-CoA hydratase (258 aa).

The protein belongs to the enoyl-CoA hydratase/isomerase family.

The enzyme catalyses cyclohexa-1,5-diene-1-carbonyl-CoA + H2O = 6-hydroxycyclohex-1-ene-1-carbonyl-CoA. Its pathway is aromatic compound metabolism; benzoyl-CoA degradation. Catalyzes the hydration of cyclohexa-1,5-diene-1-carboxyl-CoA. This chain is Cyclohexa-1,5-dienecarbonyl-CoA hydratase (dch), found in Thauera aromatica.